The sequence spans 1073 residues: Envelopment polyprotein (1073 aa).

Positions 1 to 19 are cleaved as a signal peptide; that stretch reads MMKVIWFSSLICFVIQCSG. Residues 20-453 are Lumenal-facing; that stretch reads DSGPIICAGP…NPQCYPAKKW (434 aa). Cysteines 26 and 49 form a disulfide. Asparagine 33 and asparagine 63 each carry an N-linked (GlcNAc...) asparagine; by host glycan. 10 disulfide bridges follow: cysteine 143/cysteine 156, cysteine 180/cysteine 327, cysteine 206/cysteine 216, cysteine 258/cysteine 305, cysteine 266/cysteine 303, cysteine 274/cysteine 280, cysteine 287/cysteine 292, cysteine 349/cysteine 352, cysteine 356/cysteine 424, and cysteine 376/cysteine 381. Residues 454–474 form a helical membrane-spanning segment; that stretch reads LFIIIVILLGYAGLMLLTNVL. The segment at 475–521 is golgi retention signal; sequence KAIGIWGSWVIAPVKLMFAIIKKLMRTVSCLMRKLMDRGRQVIHEEI. The Cytoplasmic portion of the chain corresponds to 475–535; it reads KAIGIWGSWV…EGNQDDVRIE (61 aa). An internal signal sequence for glycoprotein C region spans residues 536–562; the sequence is MARPRRVRHWMYSPVILTILAIGLAES. Intrachain disulfides connect cysteine 563–cysteine 604, cysteine 576–cysteine 586, cysteine 629–cysteine 725, cysteine 644–cysteine 841, cysteine 650–cysteine 698, cysteine 656–cysteine 705, cysteine 660–cysteine 687, cysteine 691–cysteine 696, cysteine 778–cysteine 793, and cysteine 809–cysteine 823. Residues 563 to 1036 are Lumenal-facing; that stretch reads CDEMVHADSK…ALFGNGLSRW (474 aa). The tract at residues 650-656 is fusion loop; it reads CRWAGDC. The interval 691–705 is fusion loop; the sequence is CGGAACGCFNAAPSC. Residues asparagine 853 and asparagine 914 are each glycosylated (N-linked (GlcNAc...) asparagine; by host). Cystine bridges form between cysteine 908–cysteine 978, cysteine 918–cysteine 921, and cysteine 943–cysteine 974. N-linked (GlcNAc...) asparagine; by host glycosylation is present at asparagine 936. Residues 1037 to 1057 form a helical membrane-spanning segment; the sequence is ILGVIGVLLGGLALFFMIMSL. Topologically, residues 1058–1073 are cytoplasmic; the sequence is FKLGTKQVFRSRTKLA.

The protein belongs to the phlebovirus envelope glycoprotein family. Homodimer. Heterodimer with glycoprotein C. Homotrimer (postfusion). In terms of assembly, heterodimer with glycoprotein N. In terms of processing, specific enzymatic cleavages in vivo yield mature proteins including glycoprotein C and glycoprotein N. Post-translationally, the cytoplasmic tail is Palmitoylated. Glycosylated. In terms of processing, palmitoylated.

Its subcellular location is the virion membrane. It localises to the host Golgi apparatus membrane. It is found in the host endoplasmic reticulum membrane. Functionally, structural component of the virion that interacts with glycoprotein C. It shields the hydrophobic fusion loops of the glycoprotein C, preventing premature fusion. The glycoprotein protrusions are arranged on an icosahedral lattice, with T=12 triangulation. They are able to attach the virion to the host cell receptor CD209/DC-SIGN and to promote fusion of membranes with the late endosome after clathrin-mediated endocytosis of the virion. Plays a role in the packaging of ribonucleoproteins during virus assembly. Structural component of the virion that interacts with glycoprotein N. Acts as a class II fusion protein that is activated upon acidification and subsequent repositioning of the glycoprotein N. The glycoprotein protrusions are arranged on an icosahedral lattice, with T=12 triangulation. They are able to attach the virion to the host cell receptor CD209/DC-SIGN and to promote fusion of membranes with the late endosome after clathrin-mediated endocytosis of the virion. The chain is Envelopment polyprotein from Dabie bandavirus (Severe fever with thrombocytopenia virus).